Reading from the N-terminus, the 247-residue chain is Triosephosphate isomerase (247 aa).

The substrate site is built by asparagine 10 and lysine 12. Residue histidine 94 is the Electrophile of the active site. Glutamate 164 serves as the catalytic Proton acceptor.

It belongs to the triosephosphate isomerase family. Homodimer.

The catalysed reaction is D-glyceraldehyde 3-phosphate = dihydroxyacetone phosphate. Its pathway is carbohydrate biosynthesis; gluconeogenesis. It functions in the pathway carbohydrate degradation; glycolysis; D-glyceraldehyde 3-phosphate from glycerone phosphate: step 1/1. The chain is Triosephosphate isomerase (Tpi) from Drosophila melanogaster (Fruit fly).